The primary structure comprises 628 residues: RING finger protein 112 (628 aa).

Residues 57-98 form an RING-type zinc finger; that stretch reads CSICLERPREPISLDCGHDFCPRCFSTHRVPGCGPPCCPECR. The interaction with ZBTB16 stretch occupies residues 132 to 628; sequence AVRAEPLLLV…GDREPLLQEE (497 aa). A GB1/RHD3-type G domain is found at 167 to 409; sequence DTPVCLLAVL…RCPGYWSEGR (243 aa). Residue 318-319 coordinates GTP; sequence RD. 2 helical membrane-spanning segments follow: residues 544-564 and 577-597; these read LAAVGGAVGAGLMGLAGGVVG and GMVAAGAAVGATGAAVVGGGV.

The protein belongs to the TRAFAC class dynamin-like GTPase superfamily. GB1/RHD3 GTPase family. GB1 subfamily. In terms of assembly, self-associates. Interacts with SP1 in an oxidative stress-regulated manner. Interacts with SIGMAR1 in an oxidative stress-regulated manner. Interacts with ZBTB16 (via C2H2-type zinc finger domains 1 and 2). In terms of processing, auto-ubiquitinated.

The protein localises to the membrane. It is found in the cytoplasm. The protein resides in the nucleus. It localises to the nuclear body. Its subcellular location is the nucleoplasm. The protein localises to the endosome. It is found in the cytoplasmic vesicle. The protein resides in the secretory vesicle. It localises to the synaptic vesicle. Its subcellular location is the postsynaptic density. The protein localises to the perikaryon. It is found in the cell projection. The protein resides in the neuron projection. It catalyses the reaction S-ubiquitinyl-[E2 ubiquitin-conjugating enzyme]-L-cysteine + [acceptor protein]-L-lysine = [E2 ubiquitin-conjugating enzyme]-L-cysteine + N(6)-ubiquitinyl-[acceptor protein]-L-lysine.. It functions in the pathway protein modification; protein ubiquitination. Its function is as follows. E3 ubiquitin-protein ligase that plays an important role in neuronal differentiation, including neurogenesis and gliogenesis, during brain development. During embryonic development initiates neuronal differentiation by inducing cell cycle arrest at the G0/G1 phase through up-regulation of cell-cycle regulatory proteins. Plays a role not only in the fetal period during the development of the nervous system, but also in the adult brain, where it is involved in the maintenance of neural functions and protection of the nervous tissue cells from oxidative stress-induced damage. Exhibits GTPase and E3 ubiquitin-protein ligase activities. Regulates dendritic spine density and synaptic neurotransmission; its ability to hydrolyze GTP is involved in the maintenance of dendritic spine density. This Bos taurus (Bovine) protein is RING finger protein 112 (RNF112).